A 704-amino-acid polypeptide reads, in one-letter code: Protein NPG1 (704 aa).

TPR repeat units lie at residues Asn-24–Phe-57, Glu-58–Ile-90, Ser-177–Leu-210, Ile-309–Pro-342, Pro-430–Ser-463, Phe-555–Ser-588, Ala-589–Ser-622, and Arg-662–Asp-695.

In terms of assembly, interacts with calmodulin in a calcium-dependent manner. Expressed only in pollen and in pollen tubes.

Calmodulin-binding protein essential for pollen germination, but not necessary for microsporogenesis or gametogenesis. The protein is Protein NPG1 of Arabidopsis thaliana (Mouse-ear cress).